Here is an 835-residue protein sequence, read N- to C-terminus: Protein translocase subunit SecA (835 aa).

ATP-binding positions include Q85, G103–T107, and D495. A disordered region spans residues K806–N835. The segment covering K820–N835 has biased composition (basic residues).

This sequence belongs to the SecA family. In terms of assembly, monomer and homodimer. Part of the essential Sec protein translocation apparatus which comprises SecA, SecYEG and auxiliary proteins SecDF. Other proteins may also be involved.

The protein localises to the cell membrane. The protein resides in the cytoplasm. The catalysed reaction is ATP + H2O + cellular proteinSide 1 = ADP + phosphate + cellular proteinSide 2.. Functionally, part of the Sec protein translocase complex. Interacts with the SecYEG preprotein conducting channel. Has a central role in coupling the hydrolysis of ATP to the transfer of proteins into and across the cell membrane, serving as an ATP-driven molecular motor driving the stepwise translocation of polypeptide chains across the membrane. This is Protein translocase subunit SecA from Onion yellows phytoplasma (strain OY-M).